Reading from the N-terminus, the 662-residue chain is Glycogen debranching enzyme (662 aa).

Asp338 acts as the Nucleophile in catalysis. Glu373 (proton donor) is an active-site residue.

It belongs to the glycosyl hydrolase 13 family.

It carries out the reaction Hydrolysis of (1-&gt;6)-alpha-D-glucosidic linkages to branches with degrees of polymerization of three or four glucose residues in limit dextrin.. It functions in the pathway glycan degradation; glycogen degradation. Functionally, removes maltotriose and maltotetraose chains that are attached by 1,6-alpha-linkage to the limit dextrin main chain, generating a debranched limit dextrin. The chain is Glycogen debranching enzyme from Yersinia pseudotuberculosis serotype O:1b (strain IP 31758).